Reading from the N-terminus, the 109-residue chain is Ferredoxin CarAc (109 aa).

The 106-residue stretch at 3–108 folds into the 2Fe-2S ferredoxin-type domain; that stretch reads AKVRVIFRAA…GLTLELPKAQ (106 aa). Residues C43, C49, C52, and C89 each contribute to the [2Fe-2S] cluster site.

Belongs to the adrenodoxin/putidaredoxin family. Monomer. Carbazole 1,9a-dioxygenase complex consists of a terminal oxygenase component CarAa, a ferredoxin reductase component fdr and a ferredoxin component CarAc. The cofactor is [2Fe-2S] cluster.

Functionally, part of the multicomponent carbazole 1,9a-dioxygenase (CARDO), that converts carbazole (CAR) into 2-aminobiphenyl-2,3-diol. Acts as a mediator in the electron transfer from fdr to CarAa. In Sphingomonas sp, this protein is Ferredoxin CarAc (carAc).